The chain runs to 538 residues: Putative outer membrane porin BglH (538 aa).

Positions 1–25 (MFRRNLITSAILLMAPLAFSAQSLA) are cleaved as a signal peptide. Residues 52–82 (KDEEKKKYTPATVNRSVSTNDQGYAANPFPT) form a disordered region. Positions 62–73 (ATVNRSVSTNDQ) are enriched in polar residues.

The protein belongs to the porin LamB (TC 1.B.3) family.

The protein resides in the cell outer membrane. May be a sugar porin with a broad carbohydrate specificity. This chain is Putative outer membrane porin BglH (bglH), found in Shigella flexneri serotype 5b (strain 8401).